The sequence spans 1210 residues: ATP-dependent helicase/nuclease subunit A (1210 aa).

The 457-residue stretch at 27–483 (QKRTAQQIEA…ILLKENFRSQ (457 aa)) folds into the UvrD-like helicase ATP-binding domain. Residue 48 to 55 (ASAGSGKT) participates in ATP binding. Residues 512 to 798 (QLIAGSHAQT…NLMTIHKSKG (287 aa)) enclose the UvrD-like helicase C-terminal domain.

It belongs to the helicase family. AddA subfamily. As to quaternary structure, heterodimer of AddA and AddB/RexB. Requires Mg(2+) as cofactor.

It catalyses the reaction Couples ATP hydrolysis with the unwinding of duplex DNA by translocating in the 3'-5' direction.. It carries out the reaction ATP + H2O = ADP + phosphate + H(+). Its function is as follows. The heterodimer acts as both an ATP-dependent DNA helicase and an ATP-dependent, dual-direction single-stranded exonuclease. Recognizes the chi site generating a DNA molecule suitable for the initiation of homologous recombination. The AddA nuclease domain is required for chi fragment generation; this subunit has the helicase and 3' -&gt; 5' nuclease activities. In Streptococcus pyogenes serotype M5 (strain Manfredo), this protein is ATP-dependent helicase/nuclease subunit A.